Consider the following 517-residue polypeptide: 2-isopropylmalate synthase (517 aa).

Residues 6-267 (IIVFDTTLRD…YTTINTPEIY (262 aa)) form the Pyruvate carboxyltransferase domain. Mn(2+)-binding residues include Asp-15, His-201, His-203, and Asn-237. Residues 393-517 (DLIGLQISDC…RLSKSSEHQV (125 aa)) are regulatory domain.

It belongs to the alpha-IPM synthase/homocitrate synthase family. LeuA type 1 subfamily. In terms of assembly, homodimer. The cofactor is Mn(2+).

It localises to the cytoplasm. The catalysed reaction is 3-methyl-2-oxobutanoate + acetyl-CoA + H2O = (2S)-2-isopropylmalate + CoA + H(+). It participates in amino-acid biosynthesis; L-leucine biosynthesis; L-leucine from 3-methyl-2-oxobutanoate: step 1/4. Catalyzes the condensation of the acetyl group of acetyl-CoA with 3-methyl-2-oxobutanoate (2-ketoisovalerate) to form 3-carboxy-3-hydroxy-4-methylpentanoate (2-isopropylmalate). The chain is 2-isopropylmalate synthase from Aliarcobacter butzleri (strain RM4018) (Arcobacter butzleri).